The sequence spans 370 residues: Accessory Sec system protein translocase subunit SecY2 (370 aa).

A run of 9 helical transmembrane segments spans residues 17-37 (IIFT…PAIT), 65-85 (VFSL…LFYY), 105-125 (IFTL…LLSH), 134-154 (WLII…SDLN), 155-175 (MRFG…RSIM), 188-208 (LLIS…FIEI), 240-260 (IAIM…NLIV), 276-296 (FSTP…SYGI), and 339-359 (WIGA…TLLI).

This sequence belongs to the SecY/SEC61-alpha family. SecY2 subfamily. Component of the accessory SecA2/SecY2 protein translocase complex required to export cell wall proteins. May form heterotrimers with SecE and SecG subunits.

The protein resides in the cell membrane. Part of the accessory SecA2/SecY2 system specifically required for export of possible cell wall proteins. The central subunit of a protein translocation channel. The protein is Accessory Sec system protein translocase subunit SecY2 of Staphylococcus carnosus (strain TM300).